The following is a 446-amino-acid chain: Coiled-coil domain-containing protein 112 (446 aa).

Coiled-coil stretches lie at residues 23–116 and 219–400; these read LEEL…RKID and ERKK…NVSR. 2 disordered regions span residues 247 to 277 and 394 to 430; these read NNTP…AVEA and VENN…LLHI. The span at 255 to 268 shows a compositional bias: basic and acidic residues; that stretch reads NKPEDNQKQKEEQR.

Its subcellular location is the cytoplasm. The protein localises to the cytoskeleton. It is found in the microtubule organizing center. The protein resides in the centrosome. It localises to the centriolar satellite. This is Coiled-coil domain-containing protein 112 (CCDC112) from Macaca fascicularis (Crab-eating macaque).